We begin with the raw amino-acid sequence, 139 residues long: Ribulose bisphosphate carboxylase small subunit (139 aa).

It belongs to the RuBisCO small chain family. Heterohexadecamer of 8 large and 8 small subunits.

The protein resides in the plastid. It localises to the chloroplast. Its function is as follows. RuBisCO catalyzes two reactions: the carboxylation of D-ribulose 1,5-bisphosphate, the primary event in carbon dioxide fixation, as well as the oxidative fragmentation of the pentose substrate in the photorespiration process. Both reactions occur simultaneously and in competition at the same active site. Although the small subunit is not catalytic it is essential for maximal activity. The protein is Ribulose bisphosphate carboxylase small subunit of Ectocarpus siliculosus (Brown alga).